The primary structure comprises 120 residues: UPF0145 protein Mboo_1021 (120 aa).

Belongs to the UPF0145 family.

This Methanoregula boonei (strain DSM 21154 / JCM 14090 / 6A8) protein is UPF0145 protein Mboo_1021.